We begin with the raw amino-acid sequence, 174 residues long: MELVVGRVAKSHGVRGELVVEVRTDDPDARFAEGTVLRGRLPRSTEVREFTVESAREHSGRLLVSLAGVDDRSAADALRGTLFVVDSAELPPSDDPDEFYDHELEGLSVRDTAGAVLGTVTEVLHSAAGELLSMRAAEDGREILIPFVTAIVPTVSVAEGYVVIDPPEGLLDPE.

The 75-residue stretch at 96–170 folds into the PRC barrel domain; that stretch reads PDEFYDHELE…YVVIDPPEGL (75 aa).

The protein belongs to the RimM family. Binds ribosomal protein uS19.

The protein localises to the cytoplasm. Its function is as follows. An accessory protein needed during the final step in the assembly of 30S ribosomal subunit, possibly for assembly of the head region. Essential for efficient processing of 16S rRNA. May be needed both before and after RbfA during the maturation of 16S rRNA. It has affinity for free ribosomal 30S subunits but not for 70S ribosomes. In Nocardia farcinica (strain IFM 10152), this protein is Ribosome maturation factor RimM.